A 482-amino-acid chain; its full sequence is Transcription factor Sox-9 (482 aa).

Disordered stretches follow at residues 1-66 (MNLL…ETED) and 160-274 (RLRI…FRDV). Positions 30 to 41 (SAGSPCPSGSGS) are enriched in low complexity. Positions 42–52 (DTENTRPQENT) are enriched in polar residues. Composition is skewed to basic and acidic residues over residues 56-66 (GDPELKKETED) and 160-174 (RLRI…DYKY). Lysine 61 participates in a covalent cross-link: Glycyl lysine isopeptide (Lys-Gly) (interchain with G-Cter in SUMO). Residues 63–103 (ETEDEKFPVCIREAVSQVLKGYDWTLVPMPVRVNGSSKSKP) are dimerization (DIM). Residues 63-103 (ETEDEKFPVCIREAVSQVLKGYDWTLVPMPVRVNGSSKSKP) are PQA. Residues 105–173 (VKRPMNAFMV…QHKKDHPDYK (69 aa)) constitute a DNA-binding region (HMG box). The segment covering 211-220 (SPHSASSMSE) has biased composition (polar residues). Residues 224–308 (PGEHSGQSQG…LPPNGHPGVG (85 aa)) are transactivation domain (TAM). 2 consecutive short sequence motifs (9aaTAD) follow at residues 276 to 285 (IGELSSEVIS) and 291 to 299 (DVNEFDQYL). The interval 295-395 (FDQYLPPNGH…HSPQQLNYSS (101 aa)) is disordered. Polar residues-rich tracts occupy residues 308–326 (GSTQ…TPSA) and 351–366 (HSLS…SQQR). A transactivation domain (TAC) region spans residues 366–482 (RTHIKTEQLS…QPVYTQLTRP (117 aa)). Residue lysine 370 forms a Glycyl lysine isopeptide (Lys-Gly) (interchain with G-Cter in SUMO) linkage. Low complexity predominate over residues 375-390 (SPSHYSDQQQQHSPQQ). The 9aaTAD 3 signature appears at 433-441 (SGLYSNFSY). A disordered region spans residues 448–482 (PMYTPIADTTGVPSIPQTHSPQHWEQPVYTQLTRP). Over residues 458 to 482 (GVPSIPQTHSPQHWEQPVYTQLTRP) the composition is skewed to polar residues.

In terms of assembly, interacts with the sumoylation factors ube2i/ubc9 and sumo1. Post-translationally, sumoylated. Lys-370 is the major site of sumoylation, although sumoylation at Lys-61 also occurs. Sumoylation plays a key role in regulating formation of the neural crest and otic placode. In terms of tissue distribution, expressed in both male and female gonads from after metamorphosis through to adult stages. In the testis, expression is restricted to the supporting Sertoli-like cells. Conversely in the ovary, expression is localized to primary oocytes (at protein level). In developing limbs, expressed before chrondrocytes form (stage 52 tadpoles) and throughout the cartilaginous anlagen until stage 56, after which expression ceases in the enlarged cells of the diaphysis. At later stages, expression continues in the chondrocytes of the epiphysis and metaphysis, and weak expression is seen in most of the diaphysis.

Its subcellular location is the nucleus. The protein localises to the cytoplasm. Transcription factor that plays a key role in chondrocytes differentiation and skeletal development. Specifically binds the 5'-ACAAAG-3' DNA motif present in enhancers and super-enhancers and promotes expression of genes important for chondrogenesis, including COL2A1. Plays a central role in successive steps of chondrocyte differentiation. Absolutely required for precartilaginous condensation, the first step in chondrogenesis during which skeletal progenitors differentiate into prechondrocytes. Together with SOX5 and SOX6, required for overt chondrogenesis when condensed prechondrocytes differentiate into early stage chondrocytes, the second step in chondrogenesis. Later, required to direct hypertrophic maturation and block osteoblast differentiation of growth plate chondrocytes: maintains chondrocyte columnar proliferation, delays prehypertrophy and then prevents osteoblastic differentiation of chondrocytes. Also required for chondrocyte hypertrophy, both indirectly, by keeping the lineage fate of chondrocytes, and directly, by remaining present in upper hypertrophic cells. Low lipid levels are the main nutritional determinant for chondrogenic commitment of skeletal progenitor cells: when lipids levels are low, FOXO transcription factors promote expression of SOX9, which induces chondrogenic commitment and suppresses fatty acid oxidation. In addition to cartilage development, also acts as a regulator of proliferation and differentiation in epithelial stem/progenitor cells. Unlikely to play a role in sex determination but may function during testicular and ovarian differentiation. This chain is Transcription factor Sox-9, found in Xenopus tropicalis (Western clawed frog).